A 256-amino-acid polypeptide reads, in one-letter code: Major prion protein 2 (256 aa).

The first 24 residues, 1-24 (MVKSHIGSWILVLFVAMWSDVALC), serve as a signal peptide directing secretion. An interaction with GRB2, ERI3 and SYN1 region spans residues 25 to 233 (KKRPKPGGGW…ESEAYYQRGA (209 aa)). The tract at residues 28 to 110 (PKPGGGWNTG…QWNKPSKPKT (83 aa)) is disordered. Repeat copies occupy residues 54-62 (PQEGGDWGQ), 63-70 (PHGGGWGQ), 71-78 (PHVGGWGQ), 79-86 (PHGGGWGQ), and 87-95 (PHGGGGWGQ). Residues 54–95 (PQEGGDWGQPHGGGWGQPHVGGWGQPHGGGWGQPHGGGGWGQ) are 5 X 8 AA tandem repeats of P-H-G-G-G-W-G-Q. Over residues 58–99 (GDWGQPHGGGWGQPHVGGWGQPHGGGWGQPHGGGGWGQGGTH) the composition is skewed to gly residues. Cu(2+)-binding residues include histidine 64, glycine 65, glycine 66, histidine 72, glycine 74, histidine 80, glycine 81, glycine 82, histidine 88, glycine 90, and glycine 91. Cysteine 182 and cysteine 217 are disulfide-bonded. N-linked (GlcNAc...) asparagine glycosylation is found at asparagine 184 and asparagine 200. The GPI-anchor amidated alanine moiety is linked to residue alanine 233. Residues 234 to 256 (SVILFSSPPVILLISFLIFLIVG) constitute a propeptide, removed in mature form.

The protein belongs to the prion family. In terms of assembly, monomer and homodimer. Has a tendency to aggregate into amyloid fibrils containing a cross-beta spine, formed by a steric zipper of superposed beta-strands. Soluble oligomers may represent an intermediate stage on the path to fibril formation. Copper binding may promote oligomerization. Interacts with GRB2, APP, ERI3/PRNPIP and SYN1. Mislocalized cytosolically exposed PrP interacts with MGRN1; this interaction alters MGRN1 subcellular location and causes lysosomal enlargement. Interacts with KIAA1191.

The protein resides in the cell membrane. It localises to the golgi apparatus. Its primary physiological function is unclear. Has cytoprotective activity against internal or environmental stresses. May play a role in neuronal development and synaptic plasticity. May be required for neuronal myelin sheath maintenance. May play a role in iron uptake and iron homeostasis. Soluble oligomers are toxic to cultured neuroblastoma cells and induce apoptosis (in vitro). Association with GPC1 (via its heparan sulfate chains) targets PRNP to lipid rafts. Also provides Cu(2+) or Zn(2+) for the ascorbate-mediated GPC1 deaminase degradation of its heparan sulfate side chains. This chain is Major prion protein 2, found in Tragelaphus strepsiceros (Greater kudu).